The following is a 376-amino-acid chain: Phosphate acyltransferase (376 aa).

A disordered region spans residues 334 to 376 (AGSLEQAKRDAGGPGSASQMASPIAGPVSGQPAEPYSAQSSKA).

This sequence belongs to the PlsX family. As to quaternary structure, homodimer. Probably interacts with PlsY.

The protein resides in the cytoplasm. The enzyme catalyses a fatty acyl-[ACP] + phosphate = an acyl phosphate + holo-[ACP]. It functions in the pathway lipid metabolism; phospholipid metabolism. Functionally, catalyzes the reversible formation of acyl-phosphate (acyl-PO(4)) from acyl-[acyl-carrier-protein] (acyl-ACP). This enzyme utilizes acyl-ACP as fatty acyl donor, but not acyl-CoA. This Paraburkholderia phymatum (strain DSM 17167 / CIP 108236 / LMG 21445 / STM815) (Burkholderia phymatum) protein is Phosphate acyltransferase.